The chain runs to 247 residues: Adenosylcobinamide-GDP ribazoletransferase (247 aa).

6 helical membrane passes run 34-54, 59-79, 113-133, 138-158, 171-193, and 197-219; these read IVMFPFIGLILGGVSGLIFIL, CGIPLAALFCILALALLTGGF, GGLALIFVLLAKILVVSELAL, MLAALAAACAAGRGSAVLLMY, VFIGKVSGRQTCITLGLAIIIAT, and PGMQGLAAMVVTCAAIFILGQLL.

This sequence belongs to the CobS family. Requires Mg(2+) as cofactor.

The protein resides in the cell inner membrane. The catalysed reaction is alpha-ribazole + adenosylcob(III)inamide-GDP = adenosylcob(III)alamin + GMP + H(+). The enzyme catalyses alpha-ribazole 5'-phosphate + adenosylcob(III)inamide-GDP = adenosylcob(III)alamin 5'-phosphate + GMP + H(+). The protein operates within cofactor biosynthesis; adenosylcobalamin biosynthesis; adenosylcobalamin from cob(II)yrinate a,c-diamide: step 7/7. Functionally, joins adenosylcobinamide-GDP and alpha-ribazole to generate adenosylcobalamin (Ado-cobalamin). Also synthesizes adenosylcobalamin 5'-phosphate from adenosylcobinamide-GDP and alpha-ribazole 5'-phosphate. The polypeptide is Adenosylcobinamide-GDP ribazoletransferase (Salmonella newport (strain SL254)).